We begin with the raw amino-acid sequence, 414 residues long: Arrestin domain-containing protein 3 (414 aa).

Short sequence motifs (PPxY motif) lie at residues 346–349 (PPSY) and 391–394 (PPLY). The interval 393–414 (LYSEIDPNPDQSADDRPSCPSR) is disordered. Basic and acidic residues predominate over residues 405 to 414 (ADDRPSCPSR).

Belongs to the arrestin family. As to quaternary structure, interacts (via PPxY motifs) with NEDD4 (via WW domains). Interacts with ADRB2. Interacts with ADRB3. Interacts with HGS (via PPxY motifs). Does not bind TXN (thioredoxin). Interacts with ITCH. Interacts with WWP1 (via WW domains). In terms of tissue distribution, highly expressed in skeletal muscle, placenta, kidney, lung, liver, blood, adrenal gland, lymph node, mammary gland, thyroid, and trachea. Very low levels in colon, thymus, spleen, small intestine, bladder and bone marrow. Strong expression in differentiated adipocytes compared to preadipocytes. Detected in omental fat and subcutaneous fat tissue.

It localises to the cytoplasm. The protein localises to the cell membrane. The protein resides in the lysosome. It is found in the endosome. Its subcellular location is the early endosome. In terms of biological role, adapter protein that plays a role in regulating cell-surface expression of adrenergic receptors and probably also other G protein-coupled receptors. Plays a role in NEDD4-mediated ubiquitination and endocytosis af activated ADRB2 and subsequent ADRB2 degradation. May recruit NEDD4 to ADRB2. Alternatively, may function as adapter protein that does not play a major role in recruiting NEDD4 to ADRB2, but rather plays a role in a targeting ADRB2 to endosomes. In Homo sapiens (Human), this protein is Arrestin domain-containing protein 3 (ARRDC3).